The sequence spans 156 residues: ATP synthase subunit b (156 aa).

The helical transmembrane segment at 7 to 27 threads the bilayer; it reads LIGQLIAFAIFVWFCMKYVWP.

It belongs to the ATPase B chain family. F-type ATPases have 2 components, F(1) - the catalytic core - and F(0) - the membrane proton channel. F(1) has five subunits: alpha(3), beta(3), gamma(1), delta(1), epsilon(1). F(0) has three main subunits: a(1), b(2) and c(10-14). The alpha and beta chains form an alternating ring which encloses part of the gamma chain. F(1) is attached to F(0) by a central stalk formed by the gamma and epsilon chains, while a peripheral stalk is formed by the delta and b chains.

It localises to the cell inner membrane. Its function is as follows. F(1)F(0) ATP synthase produces ATP from ADP in the presence of a proton or sodium gradient. F-type ATPases consist of two structural domains, F(1) containing the extramembraneous catalytic core and F(0) containing the membrane proton channel, linked together by a central stalk and a peripheral stalk. During catalysis, ATP synthesis in the catalytic domain of F(1) is coupled via a rotary mechanism of the central stalk subunits to proton translocation. Component of the F(0) channel, it forms part of the peripheral stalk, linking F(1) to F(0). The protein is ATP synthase subunit b of Histophilus somni (strain 129Pt) (Haemophilus somnus).